Here is a 206-residue protein sequence, read N- to C-terminus: Potassium-transporting ATPase KdpC subunit (206 aa).

The chain crosses the membrane as a helical span at residues 14–34 (VLAVFTLFGLGLAYSLIATGI).

This sequence belongs to the KdpC family. The system is composed of three essential subunits: KdpA, KdpB and KdpC.

The protein resides in the cell inner membrane. Part of the high-affinity ATP-driven potassium transport (or Kdp) system, which catalyzes the hydrolysis of ATP coupled with the electrogenic transport of potassium into the cytoplasm. This subunit acts as a catalytic chaperone that increases the ATP-binding affinity of the ATP-hydrolyzing subunit KdpB by the formation of a transient KdpB/KdpC/ATP ternary complex. The sequence is that of Potassium-transporting ATPase KdpC subunit from Xanthomonas axonopodis pv. citri (strain 306).